Consider the following 534-residue polypeptide: Probable alkaline/neutral invertase D (534 aa).

Residues S7 and S37 each carry the phosphoserine modification. T55 is modified (phosphothreonine). Phosphoserine is present on S532.

The protein belongs to the glycosyl hydrolase 100 family.

The catalysed reaction is Hydrolysis of terminal non-reducing beta-D-fructofuranoside residues in beta-D-fructofuranosides.. In terms of biological role, invertase that cleaves sucrose into glucose and fructose. This is Probable alkaline/neutral invertase D from Arabidopsis thaliana (Mouse-ear cress).